The sequence spans 385 residues: Protein kup-1 (385 aa).

Disordered stretches follow at residues 1 to 20 (MDDE…VRED) and 326 to 385 (SLAS…PDEY). Composition is skewed to basic and acidic residues over residues 8–20 (GSDH…VRED), 339–351 (RTDE…DDIV), and 364–385 (GRVE…PDEY).

This Caenorhabditis elegans protein is Protein kup-1 (kup-1).